Reading from the N-terminus, the 1158-residue chain is Formin-C (1158 aa).

Disordered stretches follow at residues 8–29 (INGN…PSVS), 417–523 (PNTS…LSCL), and 990–1052 (INNN…NNSQ). One can recognise a GBD/FH3 domain in the interval 20 to 388 (QQPQQNPSVS…EYSQRKLEMI (369 aa)). The segment covering 417–437 (PNTSDLFDSSTLEDTYDGNND) has biased composition (polar residues). Residues 438 to 481 (TNSCTSISTSSTPIHISQPTTLIVPSTTPNHPPQQSQQTPPLQL) are compositionally biased toward low complexity. A coiled-coil region spans residues 479-515 (LQLQKEKEKEKEKEKEKEKEKEKEQQQQQQQSNKQST). Residues 482-503 (QKEKEKEKEKEKEKEKEKEKEQ) show a composition bias toward basic and acidic residues. The FH2 domain occupies 601–998 (TKSPITPSKR…IINNNNNNNN (398 aa)). The region spanning 1134–1158 (SDDPMAVIIEALKTGSPNDMVKRAF) is the DAD domain.

The protein belongs to the formin homology family. Diaphanous subfamily. In terms of assembly, interacts (via GBD/FH3 domain) with activated Rho-GTPases.

The protein localises to the cytoplasm. The protein resides in the cytosol. It is found in the cytoskeleton. In terms of biological role, formins play an important role in the nucleation of actin and the formation of linear actin filaments. This is Formin-C (forC) from Dictyostelium discoideum (Social amoeba).